We begin with the raw amino-acid sequence, 263 residues long: 3-deoxy-manno-octulosonate cytidylyltransferase (263 aa).

The protein belongs to the KdsB family.

It is found in the cytoplasm. It carries out the reaction 3-deoxy-alpha-D-manno-oct-2-ulosonate + CTP = CMP-3-deoxy-beta-D-manno-octulosonate + diphosphate. Its pathway is nucleotide-sugar biosynthesis; CMP-3-deoxy-D-manno-octulosonate biosynthesis; CMP-3-deoxy-D-manno-octulosonate from 3-deoxy-D-manno-octulosonate and CTP: step 1/1. The protein operates within bacterial outer membrane biogenesis; lipopolysaccharide biosynthesis. Activates KDO (a required 8-carbon sugar) for incorporation into bacterial lipopolysaccharide in Gram-negative bacteria. This chain is 3-deoxy-manno-octulosonate cytidylyltransferase, found in Burkholderia mallei (strain NCTC 10229).